The primary structure comprises 72 residues: Translation initiation factor IF-1 (72 aa).

The 72-residue stretch at 1–72 (MSKEEVLEFS…TKGRITYRYK (72 aa)) folds into the S1-like domain.

It belongs to the IF-1 family. As to quaternary structure, component of the 30S ribosomal translation pre-initiation complex which assembles on the 30S ribosome in the order IF-2 and IF-3, IF-1 and N-formylmethionyl-tRNA(fMet); mRNA recruitment can occur at any time during PIC assembly.

The protein resides in the cytoplasm. In terms of biological role, one of the essential components for the initiation of protein synthesis. Stabilizes the binding of IF-2 and IF-3 on the 30S subunit to which N-formylmethionyl-tRNA(fMet) subsequently binds. Helps modulate mRNA selection, yielding the 30S pre-initiation complex (PIC). Upon addition of the 50S ribosomal subunit IF-1, IF-2 and IF-3 are released leaving the mature 70S translation initiation complex. The chain is Translation initiation factor IF-1 from Bartonella tribocorum (strain CIP 105476 / IBS 506).